Here is a 201-residue protein sequence, read N- to C-terminus: 3-isopropylmalate dehydratase small subunit (201 aa).

It belongs to the LeuD family. LeuD type 1 subfamily. As to quaternary structure, heterodimer of LeuC and LeuD.

The catalysed reaction is (2R,3S)-3-isopropylmalate = (2S)-2-isopropylmalate. The protein operates within amino-acid biosynthesis; L-leucine biosynthesis; L-leucine from 3-methyl-2-oxobutanoate: step 2/4. In terms of biological role, catalyzes the isomerization between 2-isopropylmalate and 3-isopropylmalate, via the formation of 2-isopropylmaleate. This is 3-isopropylmalate dehydratase small subunit from Buchnera aphidicola subsp. Baizongia pistaciae (strain Bp).